The sequence spans 101 residues: MRPYELMVIIDPEVEERTVEPSLQKFLNVITNDGGTIEKVDIWGRRRLAYDIKKKSEGIYAVVNFTAKPETAKELDRQLSLNETIMRTKITRPEEQKVVAE.

It belongs to the bacterial ribosomal protein bS6 family.

Functionally, binds together with bS18 to 16S ribosomal RNA. This Pseudarthrobacter chlorophenolicus (strain ATCC 700700 / DSM 12829 / CIP 107037 / JCM 12360 / KCTC 9906 / NCIMB 13794 / A6) (Arthrobacter chlorophenolicus) protein is Small ribosomal subunit protein bS6.